A 465-amino-acid polypeptide reads, in one-letter code: GTPase Der (465 aa).

EngA-type G domains are found at residues 3 to 166 (FLVA…LNEY) and 184 to 358 (IHFS…ACAN). GTP is bound by residues 9 to 16 (GRANVGKS), 56 to 60 (DTGGI), 118 to 121 (NKVD), 190 to 197 (GRPNVGKS), 237 to 241 (DTAGV), and 302 to 305 (NKWD). The region spanning 359–443 (KKITTADATR…PIVFEFKQSE (85 aa)) is the KH-like domain. A disordered region spans residues 446 to 465 (FADRKNKRSKDEGSKSKKVK).

Belongs to the TRAFAC class TrmE-Era-EngA-EngB-Septin-like GTPase superfamily. EngA (Der) GTPase family. In terms of assembly, associates with the 50S ribosomal subunit.

GTPase that plays an essential role in the late steps of ribosome biogenesis. This chain is GTPase Der, found in Francisella tularensis subsp. novicida (strain U112).